A 366-amino-acid chain; its full sequence is 3-dehydroquinate synthase (366 aa).

NAD(+)-binding positions include 71–76 (DGEQYK), 105–109 (GVIGD), 129–130 (TT), Lys142, Lys151, and 169–172 (CLQT). 3 residues coordinate Zn(2+): Glu184, His248, and His265.

The protein belongs to the sugar phosphate cyclases superfamily. Dehydroquinate synthase family. Requires NAD(+) as cofactor. It depends on Co(2+) as a cofactor. Zn(2+) is required as a cofactor.

The protein localises to the cytoplasm. It catalyses the reaction 7-phospho-2-dehydro-3-deoxy-D-arabino-heptonate = 3-dehydroquinate + phosphate. The protein operates within metabolic intermediate biosynthesis; chorismate biosynthesis; chorismate from D-erythrose 4-phosphate and phosphoenolpyruvate: step 2/7. Functionally, catalyzes the conversion of 3-deoxy-D-arabino-heptulosonate 7-phosphate (DAHP) to dehydroquinate (DHQ). This chain is 3-dehydroquinate synthase, found in Photorhabdus laumondii subsp. laumondii (strain DSM 15139 / CIP 105565 / TT01) (Photorhabdus luminescens subsp. laumondii).